Here is a 702-residue protein sequence, read N- to C-terminus: Ribosomal RNA large subunit methyltransferase K/L (702 aa).

A THUMP domain is found at L43–L154.

This sequence belongs to the methyltransferase superfamily. RlmKL family.

The protein localises to the cytoplasm. It catalyses the reaction guanosine(2445) in 23S rRNA + S-adenosyl-L-methionine = N(2)-methylguanosine(2445) in 23S rRNA + S-adenosyl-L-homocysteine + H(+). The catalysed reaction is guanosine(2069) in 23S rRNA + S-adenosyl-L-methionine = N(2)-methylguanosine(2069) in 23S rRNA + S-adenosyl-L-homocysteine + H(+). Its function is as follows. Specifically methylates the guanine in position 2445 (m2G2445) and the guanine in position 2069 (m7G2069) of 23S rRNA. In Salmonella paratyphi B (strain ATCC BAA-1250 / SPB7), this protein is Ribosomal RNA large subunit methyltransferase K/L.